Consider the following 435-residue polypeptide: MRRYLRVVGLCLACGFCSLLYAFSQLAVSLEEGAAVGRRPQAAVASWLADGGRGTGRGAGSAGPGRTGRCKEVSLSYWNPYWMLPSDVCGVNCFWEAAFRYGLKTRPTEKMHLAVVACGDRLEETVTMLKSALIFSIKPLHVHIFAEDQLHDSFKDRLDSWSFLQRFNYSLYPITFPSDSAMEWKKLFKPCASQRLFLPLILKGVDSLLYVDTDVLFLRPVDDIWSLLERFNSTQIAAMAPEHEEPRVGWYNRFARHPYYGRTGVNSGVMLMNMTRMRRKYFKNDMTTARLQWGDILMPLLKKYKLNITWGDQDLLNIMFYHNPESLFVFPCQWNYRPDHCIYGSNCREAEEEGVFILHGNRGVYHDDKQPAFRAMYEALRNCSLEDDSVRSLLKPLELELQKTVHTYCGKTYKIFIKQLAKSIRNRYDTPPKER.

At 1–6 (MRRYLR) the chain is on the cytoplasmic side. The chain crosses the membrane as a helical; Signal-anchor for type II membrane protein span at residues 7–29 (VVGLCLACGFCSLLYAFSQLAVS). The Lumenal portion of the chain corresponds to 30–435 (LEEGAAVGRR…NRYDTPPKER (406 aa)). Asn-168 and Asn-232 each carry an N-linked (GlcNAc...) asparagine glycan.

This sequence belongs to the glycosyltransferase 8 family.

The protein localises to the membrane. It catalyses the reaction 3-O-(beta-D-glucosyl)-L-seryl-[EGF-like domain protein] + UDP-alpha-D-xylose = 3-O-[alpha-D-xylosyl-(1-&gt;3)-beta-D-glucosyl]-L-seryl-[EGF-like domain protein] + UDP + H(+). Functionally, glycosyltransferase which elongates the O-linked glucose attached to EGF-like repeats in the extracellular domain of Notch proteins by catalyzing the addition of xylose. This is Glucoside xylosyltransferase 1 (Gxylt1) from Rattus norvegicus (Rat).